Consider the following 682-residue polypeptide: Potassium-transporting ATPase ATP-binding subunit (682 aa).

A run of 4 helical transmembrane segments spans residues 34 to 54 (PVMFIVWIGSLLTTCISIAMA), 62 to 82 (ALFSVAISGWLWVTVLFANFA), 219 to 239 (IALTILLIALTIVFLLATATL), and 254 to 274 (VLVALLVCLIPTTIGGLLSAI). Residue Asp-307 is the 4-aspartylphosphate intermediate of the active site. ATP is bound by residues Asp-344, Glu-348, 377 to 384 (FTAQSRMS), and Lys-395. The Mg(2+) site is built by Asp-518 and Asp-522. The next 3 membrane-spanning stretches (helical) occupy residues 588-608 (FAIIPAAFAVTYPQLNALNIM), 616-636 (AILSAVIFNALIIVFLIPLAL), and 656-676 (IYGLGGLLVPFIGIKVIDLLL).

Belongs to the cation transport ATPase (P-type) (TC 3.A.3) family. Type IA subfamily. The system is composed of three essential subunits: KdpA, KdpB and KdpC.

It localises to the cell inner membrane. The enzyme catalyses K(+)(out) + ATP + H2O = K(+)(in) + ADP + phosphate + H(+). Part of the high-affinity ATP-driven potassium transport (or Kdp) system, which catalyzes the hydrolysis of ATP coupled with the electrogenic transport of potassium into the cytoplasm. This subunit is responsible for energy coupling to the transport system and for the release of the potassium ions to the cytoplasm. The polypeptide is Potassium-transporting ATPase ATP-binding subunit (Escherichia coli O157:H7 (strain EC4115 / EHEC)).